A 210-amino-acid polypeptide reads, in one-letter code: Dof zinc finger protein DOF4.4 (210 aa).

The segment at 24 to 78 adopts a Dof-type zinc-finger fold; the sequence is RVCPRCDSDNTKFCFYNNYSESQPRYFCKNCRRYWTHGGALRNIPVGGSCRKPKR. Residues Cys26, Cys29, Cys51, and Cys54 each coordinate Zn(2+).

It localises to the nucleus. In terms of biological role, transcription factor that binds specifically to a 5'-AA[AG]G-3' consensus core sequence. The sequence is that of Dof zinc finger protein DOF4.4 (DOF4.4) from Arabidopsis thaliana (Mouse-ear cress).